Here is a 246-residue protein sequence, read N- to C-terminus: 2-C-methyl-D-erythritol 4-phosphate cytidylyltransferase (246 aa).

Belongs to the IspD/TarI cytidylyltransferase family. IspD subfamily.

It catalyses the reaction 2-C-methyl-D-erythritol 4-phosphate + CTP + H(+) = 4-CDP-2-C-methyl-D-erythritol + diphosphate. Its pathway is isoprenoid biosynthesis; isopentenyl diphosphate biosynthesis via DXP pathway; isopentenyl diphosphate from 1-deoxy-D-xylulose 5-phosphate: step 2/6. Functionally, catalyzes the formation of 4-diphosphocytidyl-2-C-methyl-D-erythritol from CTP and 2-C-methyl-D-erythritol 4-phosphate (MEP). The polypeptide is 2-C-methyl-D-erythritol 4-phosphate cytidylyltransferase (Clostridium tetani (strain Massachusetts / E88)).